The following is a 283-amino-acid chain: Non-selective voltage-gated ion channel VDAC3 (283 aa).

At cysteine 2 the chain carries N-acetylcysteine. Threonine 4 carries the phosphothreonine modification. 3 positions are modified to N6-acetyllysine: lysine 12, lysine 15, and lysine 20. Beta stranded transmembrane passes span 26–35 and 39–47; these read MVKIDLKTKS and VEFSTSGHA. Residue lysine 53 forms a Glycyl lysine isopeptide (Lys-Gly) (interchain with G-Cter in ubiquitin) linkage. 3 beta stranded membrane-spanning segments follow: residues 54–64, 69–76, and 80–89; these read ASGNLETKYKV, LTFTQKWN, and TLGTEISWEN. Lysine 90 is modified (N6-acetyllysine). Residues 95 to 104 traverse the membrane as a beta stranded segment; the sequence is LKLTLDTIFV. Residues lysine 109 and lysine 110 each participate in a glycyl lysine isopeptide (Lys-Gly) (interchain with G-Cter in ubiquitin) cross-link. Transmembrane regions (beta stranded) follow at residues 111–120, 123–130, 137–145, 150–158, 163–175, 178–185, 189–198, 202–211, 218–227, and 231–238; these read SGKLKASYRR, FSLGSNVD, TIYGWAVLA, LAGYQMSFD, KLSQ…GYKA, FQLHTHVN, EFGGSIYQKV, IETSINLAWT, RFGIAAKYKL, and TSLSAKVN. Phosphoserine is present on serine 241. NAD(+) contacts are provided by residues 242–244 and 260–264; these read LIG and SALID. 2 consecutive transmembrane segments (beta stranded) span residues 242 to 251 and 254 to 263; these read LIGLGYTQTL and GVKLTLSALI. At lysine 266 the chain carries N6-acetyllysine; alternate. Lysine 266 is covalently cross-linked (Glycyl lysine isopeptide (Lys-Gly) (interchain with G-Cter in ubiquitin); alternate). A beta stranded transmembrane segment spans residues 273–282; that stretch reads HKVGLGFELE.

Belongs to the eukaryotic mitochondrial porin family. Interacts with ARMC12 in a TBC1D21-dependent manner. Interacts with MISFA. Ubiquitinated by PRKN during mitophagy, leading to its degradation and enhancement of mitophagy. Deubiquitinated by USP30. In terms of tissue distribution, highest levels of expression detected in testis, less but still abundant expression in heart, kidney, brain, and skeletal muscle.

The protein localises to the mitochondrion outer membrane. The protein resides in the membrane. The catalysed reaction is chloride(in) = chloride(out). The enzyme catalyses K(+)(in) = K(+)(out). Functionally, non-selective voltage-gated ion channel that mediates the transport of anions and cations through the mitochondrion outer membrane and plasma membrane. Forms a high-conducting channel with a stable open state and a voltage-induced closure with a mild preference for anions over cations. Involved in male fertility and sperm mitochondrial sheath formation. This is Non-selective voltage-gated ion channel VDAC3 from Mus musculus (Mouse).